Reading from the N-terminus, the 175-residue chain is Photosynthetic NDH subunit of subcomplex B 4, chloroplastic (175 aa).

The transit peptide at 1-24 (MAEAFTSFTFTNLHIPSSYNHSPK) directs the protein to the chloroplast. Residues 95–111 (VYMFYIMFTCWGCLYFG) form a helical membrane-spanning segment.

In terms of assembly, part of the chloroplast NDH complex, composed of a mixture of chloroplast and nucleus encoded subunits. Component of the NDH subcomplex B, at least composed of PnsB1, PnsB2, PnsB3, PnsB4 and PnsB5.

It is found in the plastid. Its subcellular location is the chloroplast thylakoid membrane. Functionally, NDH shuttles electrons from NAD(P)H:plastoquinone, via FMN and iron-sulfur (Fe-S) centers, to quinones in the photosynthetic chain and possibly in a chloroplast respiratory chain. The immediate electron acceptor for the enzyme in this species is believed to be plastoquinone. Couples the redox reaction to proton translocation, and thus conserves the redox energy in a proton gradient. In Arabidopsis thaliana (Mouse-ear cress), this protein is Photosynthetic NDH subunit of subcomplex B 4, chloroplastic.